The chain runs to 292 residues: tRNA pseudouridine synthase B (292 aa).

Residue Asp38 is the Nucleophile of the active site.

It belongs to the pseudouridine synthase TruB family. Type 1 subfamily.

The enzyme catalyses uridine(55) in tRNA = pseudouridine(55) in tRNA. In terms of biological role, responsible for synthesis of pseudouridine from uracil-55 in the psi GC loop of transfer RNAs. This chain is tRNA pseudouridine synthase B, found in Streptococcus gordonii (strain Challis / ATCC 35105 / BCRC 15272 / CH1 / DL1 / V288).